The following is a 147-amino-acid chain: Small nuclear ribonucleoprotein-associated protein B (147 aa).

The Sm domain maps to 1–84; that stretch reads MGTTKMVSLL…IVSLSVQGPP (84 aa). 2 disordered regions span residues 87-106 and 128-147; these read DPSM…PAGR and APPP…FRPV.

This sequence belongs to the snRNP SmB/SmN family. Belongs to the 40S cdc5-associated complex (or cwf complex), a spliceosome sub-complex reminiscent of a late-stage spliceosome composed of the U2, U5 and U6 snRNAs and at least brr2, cdc5, cwf2/prp3, cwf3/syf1, cwf4/syf3, cwf5/ecm2, spp42/cwf6, cwf7/spf27, cwf8, cwf9, cwf10, cwf11, cwf12, prp45/cwf13, cwf14, cwf15, cwf16, cwf17, cwf18, cwf19, cwf20, cwf21, cwf22, cwf23, cwf24, cwf25, cwf26, cyp7/cwf27, cwf28, cwf29/ist3, lea1, msl1, prp5/cwf1, prp10, prp12/sap130, prp17, prp22, sap61, sap62, sap114, sap145, slu7, smb1, smd1, smd3, smf1, smg1 and syf2.

The protein resides in the nucleus. Its subcellular location is the cytoplasm. Its function is as follows. Plays a role in pre-mRNA splicing as a core component of the spliceosomal U1, U2, U4 and U5 small nuclear ribonucleoproteins (snRNPs), the building blocks of the spliceosome. The polypeptide is Small nuclear ribonucleoprotein-associated protein B (smb1) (Schizosaccharomyces pombe (strain 972 / ATCC 24843) (Fission yeast)).